A 401-amino-acid polypeptide reads, in one-letter code: UDP-GlcNAc:betaGal beta-1,3-N-acetylglucosaminyltransferase 9 (401 aa).

Residues 1–10 (MRRRLRLRRE) lie on the Cytoplasmic side of the membrane. The chain crosses the membrane as a helical; Signal-anchor for type II membrane protein span at residues 11–31 (ALLTLLLGATLGLLLYAQQEG). Over 32 to 401 (AAPTTSAPRA…VPAGPFQWGP (370 aa)) the chain is Lumenal. Positions 33-85 (APTTSAPRAQGRAAPGPTPGLRVFQAPDTGAAPPAYEGDTPEPPTPTGPFDFG) are disordered. Over residues 38-47 (APRAQGRAAP) the composition is skewed to low complexity.

It belongs to the glycosyltransferase 31 family.

The protein localises to the golgi apparatus membrane. This chain is UDP-GlcNAc:betaGal beta-1,3-N-acetylglucosaminyltransferase 9, found in Bos taurus (Bovine).